We begin with the raw amino-acid sequence, 1343 residues long: DNA-directed RNA polymerase subunit beta (1343 aa).

Belongs to the RNA polymerase beta chain family. As to quaternary structure, the RNAP catalytic core consists of 2 alpha, 1 beta, 1 beta' and 1 omega subunit. When a sigma factor is associated with the core the holoenzyme is formed, which can initiate transcription.

The catalysed reaction is RNA(n) + a ribonucleoside 5'-triphosphate = RNA(n+1) + diphosphate. DNA-dependent RNA polymerase catalyzes the transcription of DNA into RNA using the four ribonucleoside triphosphates as substrates. The polypeptide is DNA-directed RNA polymerase subunit beta (Shewanella piezotolerans (strain WP3 / JCM 13877)).